A 369-amino-acid polypeptide reads, in one-letter code: MKYKRIVFKVGTSSLTNEDGSLSRSKVKDITQQLAMLHEAGHELILVSSGAIAAGFGALGFKKRPTKIADKQASAAVGQGLLLEEYTTNLLLRQIVSAQILLTQDDFVDKRRYKNAHQALSVLLNRGAIPIINENDSVVIDELKVGDNDTLSAQVAAMVQADLLVFLTDVDGLYTGNPNSDPRAKRLERIETINREIIDMAGGAGSSNGTGGMLTKIKAATIATESGVPVYICSSLKSDSMIEAAEETEDGSYFVAQEKGLRTQKQWLAFYAQSQGSIWVDKGAAEALSQHGKSLLLSGIVEAEGAFSYGDIVTVFDKESGKSLGKGRVQFGASALEDMLRSQKAKGVLIYRDDWISITPEIQLLFTEF.

K9 lines the ATP pocket. Residues S49, D136, and N148 each contribute to the substrate site. ATP contacts are provided by residues 168–169 (TD) and 210–216 (TGGMLTK). Residues 275–355 (QGSIWVDKGA…KGVLIYRDDW (81 aa)) form the PUA domain.

The protein belongs to the glutamate 5-kinase family.

Its subcellular location is the cytoplasm. It catalyses the reaction L-glutamate + ATP = L-glutamyl 5-phosphate + ADP. The protein operates within amino-acid biosynthesis; L-proline biosynthesis; L-glutamate 5-semialdehyde from L-glutamate: step 1/2. Functionally, catalyzes the transfer of a phosphate group to glutamate to form L-glutamate 5-phosphate. In Streptococcus pneumoniae (strain 70585), this protein is Glutamate 5-kinase.